The following is a 307-amino-acid chain: Mitochondrial glycine transporter YMC1 (307 aa).

3 Solcar repeats span residues 26–106 (VKDL…MKRF), 121–204 (PQYY…LIAN), and 218–305 (PAWK…AMRL). The next 6 helical transmembrane spans lie at 29-49 (LLAG…FDTT), 83-103 (LTPL…NEAM), 118-138 (LSLP…SFLA), 183-203 (TILR…ALIA), 223-243 (CIFG…LDVI), and 277-298 (FFKG…TFAT).

This sequence belongs to the mitochondrial carrier (TC 2.A.29) family.

The protein resides in the mitochondrion inner membrane. Functionally, secondary mitochondrial glycine transporter required for the biosynthesis of heme at high glycine concentrations. Imports the precursor glycine into the mitochondrial matrix, where it is condensed with succinyl-CoA to produce 5-aminolevulinate (ALA), the first step of heme biosynthesis. The protein is Mitochondrial glycine transporter YMC1 of Saccharomyces cerevisiae (strain ATCC 204508 / S288c) (Baker's yeast).